A 505-amino-acid polypeptide reads, in one-letter code: Amidophosphoribosyltransferase (505 aa).

The active-site Nucleophile is the C2. One can recognise a Glutamine amidotransferase type-2 domain in the interval 2-236 (CGIVGIAGVM…PGEAIYITEE (235 aa)). Mg(2+) contacts are provided by T305, D367, and D368.

The protein in the C-terminal section; belongs to the purine/pyrimidine phosphoribosyltransferase family. As to quaternary structure, homotetramer. Mg(2+) serves as cofactor.

It carries out the reaction 5-phospho-beta-D-ribosylamine + L-glutamate + diphosphate = 5-phospho-alpha-D-ribose 1-diphosphate + L-glutamine + H2O. The protein operates within purine metabolism; IMP biosynthesis via de novo pathway; N(1)-(5-phospho-D-ribosyl)glycinamide from 5-phospho-alpha-D-ribose 1-diphosphate: step 1/2. With respect to regulation, inhibited by iodoacetamide and by the glutamine analogs chloroketone and DON. In terms of biological role, catalyzes the formation of phosphoribosylamine from phosphoribosylpyrophosphate (PRPP) and glutamine. Can also use NH(3) in place of glutamine. The polypeptide is Amidophosphoribosyltransferase (Escherichia coli (strain K12)).